The sequence spans 221 residues: UPF0758 protein CGSHiEE_07200 (221 aa).

The MPN domain maps to 99-221 (IINDPETVKL…CYSFAENCLL (123 aa)). Zn(2+)-binding residues include H170, H172, and D183. A JAMM motif motif is present at residues 170–183 (HNHPSGVTEPSYSD).

Belongs to the UPF0758 family.

In Haemophilus influenzae (strain PittEE), this protein is UPF0758 protein CGSHiEE_07200.